We begin with the raw amino-acid sequence, 855 residues long: Beta-mannosidase B (855 aa).

The N-linked (GlcNAc...) asparagine glycan is linked to Asn-98. The active-site Proton donor is the Glu-430. 2 N-linked (GlcNAc...) asparagine glycosylation sites follow: Asn-693 and Asn-730.

It belongs to the glycosyl hydrolase 2 family. Beta-mannosidase B subfamily. In terms of assembly, homodimer.

It is found in the secreted. It carries out the reaction Hydrolysis of terminal, non-reducing beta-D-mannose residues in beta-D-mannosides.. The protein operates within glycan metabolism; N-glycan degradation. Its function is as follows. Exoglycosidase that cleaves the single beta-linked mannose residue from the non-reducing end of beta-mannosidic oligosaccharides of various complexity and length. Prefers mannobiose over mannotriose. Is also severely restricted by galactosyl substitutions at the +1 subsite. Has no activity against polymeric mannan. The sequence is that of Beta-mannosidase B (man9) from Thermothelomyces thermophilus (Myceliophthora thermophila).